Consider the following 376-residue polypeptide: Succinyl-diaminopimelate desuccinylase (376 aa).

Position 67 (H67) interacts with Zn(2+). D69 is a catalytic residue. D100 lines the Zn(2+) pocket. E134 acts as the Proton acceptor in catalysis. Zn(2+) is bound by residues E135, E163, and H349.

It belongs to the peptidase M20A family. DapE subfamily. As to quaternary structure, homodimer. It depends on Zn(2+) as a cofactor. The cofactor is Co(2+).

It catalyses the reaction N-succinyl-(2S,6S)-2,6-diaminopimelate + H2O = (2S,6S)-2,6-diaminopimelate + succinate. It functions in the pathway amino-acid biosynthesis; L-lysine biosynthesis via DAP pathway; LL-2,6-diaminopimelate from (S)-tetrahydrodipicolinate (succinylase route): step 3/3. Its function is as follows. Catalyzes the hydrolysis of N-succinyl-L,L-diaminopimelic acid (SDAP), forming succinate and LL-2,6-diaminopimelate (DAP), an intermediate involved in the bacterial biosynthesis of lysine and meso-diaminopimelic acid, an essential component of bacterial cell walls. This is Succinyl-diaminopimelate desuccinylase from Idiomarina loihiensis (strain ATCC BAA-735 / DSM 15497 / L2-TR).